A 280-amino-acid chain; its full sequence is MKNSLLLYAEDETNGEASTCGRILIFLSWVLVVLTMPFSLLVCFKVVQEYERAVIFRLGRLMQGGAKGPGIFFILPCIDAYARVDLRTRTYDVPPQEVLTKDSVTVSVDAVVYYRVSNATVSIANVENAHHSTRLLAQTTLRNTMGTRHLHEILSERMTISGSMQLSLDEATEAWGIKVERVEIKDVRLPVQLQRAMAAEAEAAREARAKVIAAEGEQKASRALREASEVIGDSPAALQLRYLQTLNTISAEKNSTIVFPLPIDILTYFMKSKEAFVPNA.

The helical transmembrane segment at 23 to 43 threads the bilayer; it reads ILIFLSWVLVVLTMPFSLLVC.

This sequence belongs to the band 7/mec-2 family.

Its subcellular location is the membrane. The chain is Band 7 protein AGAP004871 from Anopheles gambiae (African malaria mosquito).